We begin with the raw amino-acid sequence, 760 residues long: UDP-N-acetylmuramoyl-L-alanyl-D-glutamate--2,6-diaminopimelate ligase MurE homolog, chloroplastic (760 aa).

The transit peptide at 1–59 (MATAPLAFRLPFPFSFPSASRPPPSRILAPPTPRRLPLRLAAAAARRFRPPTADDEPPE) directs the protein to the chloroplast. Disordered stretches follow at residues 13 to 159 (PFSF…TDEL) and 176 to 205 (LSVVSVADEEDEEVEGGEDEDDGLPLDEDG). Pro residues predominate over residues 20–34 (SRPPPSRILAPPTPR). The span at 53-62 (ADDEPPEAAE) shows a compositional bias: acidic residues. Basic and acidic residues predominate over residues 118 to 132 (EIDRAIAEKREEFTR). Acidic residues-rich tracts occupy residues 150–159 (PEDEDLTDEL) and 182–205 (ADEEDEEVEGGEDEDDGLPLDEDG).

The protein belongs to the MurCDEF family. MurE subfamily. Component of the plastid-encoded plastid RNA polymerase (PEP) complex.

It localises to the plastid. The protein resides in the chloroplast. In terms of biological role, required for the activity of the plastid-encoded RNA polymerase (PEP) and full expression of genes transcribed by PEP. Required for the proper build-up and formation of the PEP-complex. In Zea mays (Maize), this protein is UDP-N-acetylmuramoyl-L-alanyl-D-glutamate--2,6-diaminopimelate ligase MurE homolog, chloroplastic.